The chain runs to 431 residues: CinA-like protein (431 aa).

Belongs to the CinA family.

This is CinA-like protein from Chlorobium luteolum (strain DSM 273 / BCRC 81028 / 2530) (Pelodictyon luteolum).